The following is a 95-amino-acid chain: Small ribosomal subunit protein uS19 (95 aa).

Belongs to the universal ribosomal protein uS19 family.

Protein S19 forms a complex with S13 that binds strongly to the 16S ribosomal RNA. This Clostridium kluyveri (strain NBRC 12016) protein is Small ribosomal subunit protein uS19.